The sequence spans 490 residues: NAD/NADP-dependent betaine aldehyde dehydrogenase (490 aa).

K(+) contacts are provided by T26, I27, and D93. 150–153 (GAWN) is an NADPH binding site. K162 (charge relay system) is an active-site residue. 176–179 (KPSE) is a binding site for NADPH. V180 contributes to the K(+) binding site. Residues G209 and 230 to 233 (GTST) contribute to the NADPH site. Residue L246 coordinates K(+). E252 (proton acceptor) is an active-site residue. The NADPH site is built by C286 and E387. Residue C286 is the Nucleophile of the active site. Residue C286 is modified to Cysteine sulfenic acid (-SOH). K(+) is bound by residues K457 and G460. The Charge relay system role is filled by E464.

This sequence belongs to the aldehyde dehydrogenase family. In terms of assembly, dimer of dimers. K(+) is required as a cofactor.

The catalysed reaction is betaine aldehyde + NAD(+) + H2O = glycine betaine + NADH + 2 H(+). The enzyme catalyses betaine aldehyde + NADP(+) + H2O = glycine betaine + NADPH + 2 H(+). It functions in the pathway amine and polyamine biosynthesis; betaine biosynthesis via choline pathway; betaine from betaine aldehyde: step 1/1. Its function is as follows. Involved in the biosynthesis of the osmoprotectant glycine betaine. Catalyzes the irreversible oxidation of betaine aldehyde to the corresponding acid. In P.aeruginosa this reaction is a compulsory step in the assimilation of carbon and nitrogen when bacteria are growing in choline or choline precursors. Can use NADP(+) with similar efficiency to NAD(+), a property that can be used by the bacterium to produce the NADPH needed to combat the oxidative stress imposed by the host defenses. This chain is NAD/NADP-dependent betaine aldehyde dehydrogenase, found in Pseudomonas aeruginosa (strain ATCC 15692 / DSM 22644 / CIP 104116 / JCM 14847 / LMG 12228 / 1C / PRS 101 / PAO1).